Consider the following 523-residue polypeptide: 2-hydroxyisoflavanone synthase (523 aa).

Residues 2–22 traverse the membrane as a helical segment; the sequence is LVELAITLLVIALFIHLRPTL. Heme is bound at residue cysteine 450.

The protein belongs to the cytochrome P450 family. Heme is required as a cofactor.

The protein resides in the microsome membrane. It catalyses the reaction (2S)-liquiritigenin + reduced [NADPH--hemoprotein reductase] + O2 = (2R,3S)-2,4',7-trihydroxyisoflavanone + oxidized [NADPH--hemoprotein reductase] + H2O + H(+). It carries out the reaction (2S)-naringenin + reduced [NADPH--hemoprotein reductase] + O2 = 2-hydroxy-2,3-dihydrogenistein + oxidized [NADPH--hemoprotein reductase] + H2O + H(+). 2-hydroxyisoflavanone synthase, which catalyzes the hydroxylation associated with 1,2-aryl migration of flavanones. Converts liquiritigenin and naringenin into highly unstable precursors of the isoflavones daidzein and genistein. Acts only on substrates with (2S)-chirality. This Glycyrrhiza echinata (Licorice) protein is 2-hydroxyisoflavanone synthase (CYP93C2).